The following is a 156-amino-acid chain: SsrA-binding protein (156 aa).

Belongs to the SmpB family.

It localises to the cytoplasm. In terms of biological role, required for rescue of stalled ribosomes mediated by trans-translation. Binds to transfer-messenger RNA (tmRNA), required for stable association of tmRNA with ribosomes. tmRNA and SmpB together mimic tRNA shape, replacing the anticodon stem-loop with SmpB. tmRNA is encoded by the ssrA gene; the 2 termini fold to resemble tRNA(Ala) and it encodes a 'tag peptide', a short internal open reading frame. During trans-translation Ala-aminoacylated tmRNA acts like a tRNA, entering the A-site of stalled ribosomes, displacing the stalled mRNA. The ribosome then switches to translate the ORF on the tmRNA; the nascent peptide is terminated with the 'tag peptide' encoded by the tmRNA and targeted for degradation. The ribosome is freed to recommence translation, which seems to be the essential function of trans-translation. In Bacillus pumilus (strain SAFR-032), this protein is SsrA-binding protein.